A 130-amino-acid chain; its full sequence is Holo-[acyl-carrier-protein] synthase (130 aa).

D9 and E58 together coordinate Mg(2+).

It belongs to the P-Pant transferase superfamily. AcpS family. Requires Mg(2+) as cofactor.

It localises to the cytoplasm. The catalysed reaction is apo-[ACP] + CoA = holo-[ACP] + adenosine 3',5'-bisphosphate + H(+). Functionally, transfers the 4'-phosphopantetheine moiety from coenzyme A to a Ser of acyl-carrier-protein. The polypeptide is Holo-[acyl-carrier-protein] synthase (Mycobacterium leprae (strain Br4923)).